Here is a 97-residue protein sequence, read N- to C-terminus: Putative septation protein SpoVG (97 aa).

The protein belongs to the SpoVG family.

In terms of biological role, essential for sporulation. Interferes with or is a negative regulator of the pathway leading to asymmetric septation. The polypeptide is Putative septation protein SpoVG (Bacillus velezensis (strain DSM 23117 / BGSC 10A6 / LMG 26770 / FZB42) (Bacillus amyloliquefaciens subsp. plantarum)).